The primary structure comprises 385 residues: 8-amino-7-oxononanoate synthase (385 aa).

Residue Arg-27 coordinates substrate. Residue 105 to 106 (GY) coordinates pyridoxal 5'-phosphate. His-130 provides a ligand contact to substrate. Residues Ser-176, 201 to 204 (DEAH), and 232 to 235 (TMSK) each bind pyridoxal 5'-phosphate. At Lys-235 the chain carries N6-(pyridoxal phosphate)lysine. Thr-345 contacts substrate.

This sequence belongs to the class-II pyridoxal-phosphate-dependent aminotransferase family. BioF subfamily. In terms of assembly, homodimer. Requires pyridoxal 5'-phosphate as cofactor.

The enzyme catalyses 6-carboxyhexanoyl-[ACP] + L-alanine + H(+) = (8S)-8-amino-7-oxononanoate + holo-[ACP] + CO2. The protein operates within cofactor biosynthesis; biotin biosynthesis. Its function is as follows. Catalyzes the decarboxylative condensation of pimeloyl-[acyl-carrier protein] and L-alanine to produce 8-amino-7-oxononanoate (AON), [acyl-carrier protein], and carbon dioxide. The polypeptide is 8-amino-7-oxononanoate synthase (Mycobacterium leprae (strain Br4923)).